Reading from the N-terminus, the 372-residue chain is tRNA-specific 2-thiouridylase MnmA (372 aa).

ATP is bound by residues 13–20 and M39; that span reads GMSGGVDS. The segment at 99–101 is interaction with target base in tRNA; sequence NPD. C104 (nucleophile) is an active-site residue. C104 and C200 are oxidised to a cystine. G128 is an ATP binding site. The tract at residues 150-152 is interaction with tRNA; sequence KDQ. The active-site Cysteine persulfide intermediate is the C200. Residues 310–311 are interaction with tRNA; that stretch reads RY.

The protein belongs to the MnmA/TRMU family.

It is found in the cytoplasm. The enzyme catalyses S-sulfanyl-L-cysteinyl-[protein] + uridine(34) in tRNA + AH2 + ATP = 2-thiouridine(34) in tRNA + L-cysteinyl-[protein] + A + AMP + diphosphate + H(+). Its function is as follows. Catalyzes the 2-thiolation of uridine at the wobble position (U34) of tRNA, leading to the formation of s(2)U34. The protein is tRNA-specific 2-thiouridylase MnmA of Bacillus licheniformis (strain ATCC 14580 / DSM 13 / JCM 2505 / CCUG 7422 / NBRC 12200 / NCIMB 9375 / NCTC 10341 / NRRL NRS-1264 / Gibson 46).